The chain runs to 406 residues: RILP-like protein 1 (406 aa).

One can recognise an RH1 domain in the interval 5-99 (QLGAALDKSA…LEKEKKHKKE (95 aa)). Residues 105 to 319 (DVWRGEAQDL…KVFMLQEEIA (215 aa)) are a coiled coil. 2 disordered regions span residues 234–272 (EVSSLRQEVSRLKEKLKEQSRSNEEEAQEPVGPPSPAQE) and 323–351 (SEEQEEENGPPLPDPSETLRTNPRSNFQP). The span at 241–257 (EVSRLKEKLKEQSRSNE) shows a compositional bias: basic and acidic residues. The RH2 domain occupies 289-358 (RPRFTLQELR…FQPESGIKRL (70 aa)). Residues 340–351 (TLRTNPRSNFQP) show a composition bias toward polar residues.

This sequence belongs to the RILPL family.

It is found in the cytoplasm. Its subcellular location is the cytosol. It localises to the cytoskeleton. The protein resides in the microtubule organizing center. The protein localises to the centrosome. It is found in the cell projection. Its subcellular location is the cilium. Functionally, plays a role in the regulation of cell shape and polarity. Plays a role in cellular protein transport, including protein transport away from primary cilia. Neuroprotective protein. The chain is RILP-like protein 1 (rilpl1) from Danio rerio (Zebrafish).